Reading from the N-terminus, the 129-residue chain is Small ribosomal subunit protein uS13m (129 aa).

The segment at 92 to 129 (HQDGSPLRGQRTHTNARTARKQIRKGNERRLPKEQATD) is disordered. A compositionally biased stretch (basic and acidic residues) spans 116–129 (KGNERRLPKEQATD).

The protein belongs to the universal ribosomal protein uS13 family. In terms of assembly, part of the small ribosomal subunit.

The protein resides in the mitochondrion. Its function is as follows. Located at the top of the head of the small subunit, it contacts several helices of the 18S rRNA. The sequence is that of Small ribosomal subunit protein uS13m (RPS13) from Zea mays (Maize).